An 87-amino-acid polypeptide reads, in one-letter code: Small ribosomal subunit protein bS20 (87 aa).

Residues 1–11 show a composition bias toward basic residues; sequence MANIKSAKKRA. Residues 1 to 27 are disordered; sequence MANIKSAKKRAVQSEKRRQHNASQRSM.

The protein belongs to the bacterial ribosomal protein bS20 family.

Its function is as follows. Binds directly to 16S ribosomal RNA. The sequence is that of Small ribosomal subunit protein bS20 from Actinobacillus succinogenes (strain ATCC 55618 / DSM 22257 / CCUG 43843 / 130Z).